The primary structure comprises 257 residues: NAD kinase (257 aa).

The active-site Proton acceptor is the D44. Residues 44–45 (DG), R49, 116–117 (NE), D146, A154, and 157–162 (TAYNLS) contribute to the NAD(+) site.

The protein belongs to the NAD kinase family. It depends on a divalent metal cation as a cofactor.

It is found in the cytoplasm. The catalysed reaction is NAD(+) + ATP = ADP + NADP(+) + H(+). Its function is as follows. Involved in the regulation of the intracellular balance of NAD and NADP, and is a key enzyme in the biosynthesis of NADP. Catalyzes specifically the phosphorylation on 2'-hydroxyl of the adenosine moiety of NAD to yield NADP. This is NAD kinase from Rhizorhabdus wittichii (strain DSM 6014 / CCUG 31198 / JCM 15750 / NBRC 105917 / EY 4224 / RW1) (Sphingomonas wittichii).